The sequence spans 122 residues: Large ribosomal subunit protein bL12 (122 aa).

Belongs to the bacterial ribosomal protein bL12 family. Homodimer. Part of the ribosomal stalk of the 50S ribosomal subunit. Forms a multimeric L10(L12)X complex, where L10 forms an elongated spine to which 2 to 4 L12 dimers bind in a sequential fashion. Binds GTP-bound translation factors.

Forms part of the ribosomal stalk which helps the ribosome interact with GTP-bound translation factors. Is thus essential for accurate translation. This chain is Large ribosomal subunit protein bL12, found in Neisseria lactamica.